A 299-amino-acid chain; its full sequence is GTPase Era (299 aa).

An Era-type G domain is found at 4–171 (KSGFVAILGR…VDILSENLEE (168 aa)). Residues 12 to 19 (GRPNVGKS) form a G1 region. 12–19 (GRPNVGKS) provides a ligand contact to GTP. Positions 38–42 (QTTRN) are G2. Residues 59 to 62 (DTPG) are G3. Residues 59–63 (DTPGI) and 121–124 (NKID) contribute to the GTP site. The tract at residues 121–124 (NKID) is G4. Residues 150–152 (ISA) form a G5 region. In terms of domain architecture, KH type-2 spans 202–280 (TREEIPHSVA…FLETWVKVKK (79 aa)).

Belongs to the TRAFAC class TrmE-Era-EngA-EngB-Septin-like GTPase superfamily. Era GTPase family. In terms of assembly, monomer.

The protein resides in the cytoplasm. The protein localises to the cell membrane. An essential GTPase that binds both GDP and GTP, with rapid nucleotide exchange. Plays a role in 16S rRNA processing and 30S ribosomal subunit biogenesis and possibly also in cell cycle regulation and energy metabolism. This chain is GTPase Era, found in Streptococcus gordonii (strain Challis / ATCC 35105 / BCRC 15272 / CH1 / DL1 / V288).